The sequence spans 68 residues: Beta-defensin 1 (68 aa).

An N-terminal signal peptide occupies residues 1–21; that stretch reads MRTSYLLLFTLCLLLSEMASG. The propeptide occupies 22-32; it reads GNFLTGLGHRS. Disulfide bonds link Cys-37–Cys-66, Cys-44–Cys-59, and Cys-49–Cys-67.

It belongs to the beta-defensin family. In terms of assembly, monomer. Homodimer.

It is found in the secreted. The protein resides in the membrane. Has bactericidal activity. May act as a ligand for C-C chemokine receptor CCR6. Positively regulates the sperm motility and bactericidal activity in a CCR6-dependent manner. Binds to CCR6 and triggers Ca2+ mobilization in the sperm which is important for its motility. The sequence is that of Beta-defensin 1 (DEFB1) from Pan troglodytes (Chimpanzee).